The primary structure comprises 233 residues: Cilia- and flagella-associated protein 299 (233 aa).

The protein localises to the cytoplasm. It is found in the nucleus. Functionally, may be involved in spermatogenesis. This Homo sapiens (Human) protein is Cilia- and flagella-associated protein 299.